The chain runs to 821 residues: Probable phosphoenolpyruvate synthase (821 aa).

The Tele-phosphohistidine intermediate role is filled by histidine 444. The substrate site is built by arginine 543, arginine 590, glutamate 687, glycine 709, threonine 710, asparagine 711, and aspartate 712. Glutamate 687 lines the Mg(2+) pocket. Aspartate 712 provides a ligand contact to Mg(2+). Cysteine 759 (proton donor) is an active-site residue.

It belongs to the PEP-utilizing enzyme family. Mg(2+) is required as a cofactor.

The enzyme catalyses pyruvate + ATP + H2O = phosphoenolpyruvate + AMP + phosphate + 2 H(+). The protein operates within carbohydrate biosynthesis; gluconeogenesis. Its function is as follows. Catalyzes the phosphorylation of pyruvate to phosphoenolpyruvate. The chain is Probable phosphoenolpyruvate synthase (ppsA) from Pyrococcus horikoshii (strain ATCC 700860 / DSM 12428 / JCM 9974 / NBRC 100139 / OT-3).